The sequence spans 83 residues: Putative regulatory protein FMG_0656 (83 aa).

It belongs to the RemA family.

In Finegoldia magna (strain ATCC 29328 / DSM 20472 / WAL 2508) (Peptostreptococcus magnus), this protein is Putative regulatory protein FMG_0656.